Consider the following 326-residue polypeptide: MELSGATMARGLAVLLVLFLHIKNLPAQAADTCPEVKVVGLEGSDKLTILRGCPGLPGAPGPKGEAGVIGERGERGLPGAPGKAGPVGPKGDRGEKGMRGEKGDAGQSQSCATGPRNCKDLLDRGYFLSGWHTIYLPDCRPLTVLCDMDTDGGGWTVFQRRMDGSVDFYRDWAAYKQGFGSQLGEFWLGNDNIHALTAQGSSELRVDLVDFEGNHQFAKYKSFKVADEAEKYKLVLGAFVGGSAGNSLTGHNNNFFSTKDQDNDVSSSNCAEKFQGAWWYADCHASNLNGLYLMGPHESYANGINWSAAKGYKYSYKVSEMKVRPA.

The first 29 residues, 1–29 (MELSGATMARGLAVLLVLFLHIKNLPAQA), serve as a signal peptide directing secretion. The Collagen-like domain occupies 55 to 93 (GLPGAPGPKGEAGVIGERGERGLPGAPGKAGPVGPKGDR). The tract at residues 72–111 (RGERGLPGAPGKAGPVGPKGDRGEKGMRGEKGDAGQSQSC) is disordered. Residues 77–89 (LPGAPGKAGPVGP) show a composition bias toward low complexity. Residues 90–104 (KGDRGEKGMRGEKGD) show a composition bias toward basic and acidic residues. The 218-residue stretch at 109 to 326 (QSCATGPRNC…KVSEMKVRPA (218 aa)) folds into the Fibrinogen C-terminal domain. 2 disulfide bridges follow: C111/C139 and C118/C146. Residues 115-154 (PRNCKDLLDRGYFLSGWHTIYLPDCRPLTVLCDMDTDGGG) form an a domain; contributes to trimerization region. Positions 155–243 (WTVFQRRMDG…LVLGAFVGGS (89 aa)) are b domain; contributes to trimerization. The Ca(2+) site is built by D262, D264, S266, and S268. The cysteines at positions 270 and 283 are disulfide-linked. 282–284 (DCH) lines the a carbohydrate pocket. N-linked (GlcNAc...) asparagine glycosylation occurs at N305. A p domain region spans residues 317–326 (KVSEMKVRPA).

Belongs to the ficolin lectin family. Homotrimer. Interacts with elastin/ELN. Interacts (via Fibrinogen C-terminal domain) with FFAR2. Interacts with CRP; may regulate monocyte activation by FCN1. As to expression, peripheral blood leukocytes, monocytes and granulocytes. Also detected in spleen, lung, and thymus, may be due to the presence of tissue macrophages or trapped blood in these tissues. Not detected on lymphocytes.

It localises to the secreted. Its subcellular location is the cell membrane. Its function is as follows. Extracellular lectin functioning as a pattern-recognition receptor in innate immunity. Binds the sugar moieties of pathogen-associated molecular patterns (PAMPs) displayed on microbes and activates the lectin pathway of the complement system. May also activate monocytes through a G protein-coupled receptor, FFAR2, inducing the secretion of interleukin-8/IL-8. Binds preferentially to 9-O-acetylated 2-6-linked sialic acid derivatives and to various glycans containing sialic acid engaged in a 2-3 linkage. The protein is Ficolin-1 (FCN1) of Homo sapiens (Human).